Reading from the N-terminus, the 56-residue chain is Small ribosomal subunit protein bS21 (56 aa).

It belongs to the bacterial ribosomal protein bS21 family.

The sequence is that of Small ribosomal subunit protein bS21 from Synechococcus sp. (strain RCC307).